The following is a 44-amino-acid chain: Thaumatin-like protein 5 (44 aa).

This sequence belongs to the thaumatin family.

In Glebionis coronaria (Crown daisy), this protein is Thaumatin-like protein 5.